The following is a 653-amino-acid chain: ATP-dependent zinc metalloprotease FtsH 1 (653 aa).

The segment at M1–K20 is disordered. The Cytoplasmic portion of the chain corresponds to M1–N30. Residues I31–W51 traverse the membrane as a helical segment. The Periplasmic portion of the chain corresponds to E52 to W126. The helical transmembrane segment at W127 to L147 threads the bilayer. At Y148 to V653 the chain is on the cytoplasmic side. G219–T226 is a binding site for ATP. Zn(2+) is bound at residue H441. Residue E442 is part of the active site. H445 and D518 together coordinate Zn(2+).

This sequence in the central section; belongs to the AAA ATPase family. It in the C-terminal section; belongs to the peptidase M41 family. As to quaternary structure, homohexamer. The cofactor is Zn(2+).

Its subcellular location is the cell inner membrane. Acts as a processive, ATP-dependent zinc metallopeptidase for both cytoplasmic and membrane proteins. Plays a role in the quality control of integral membrane proteins. This Petrotoga mobilis (strain DSM 10674 / SJ95) protein is ATP-dependent zinc metalloprotease FtsH 1.